Reading from the N-terminus, the 388-residue chain is Pepsin A (388 aa).

The signal sequence occupies residues 1–15 (MKWLLLLGLVALSEC). Residues 16 to 62 (IIYKVPLVRKKSLRRNLSEHGLLKDFLKKHNRNPASKYFPQTEAPTL) constitute a propeptide, activation peptide. The region spanning 76 to 385 (YFGTIGIGTP…DRANNQVGLA (310 aa)) is the Peptidase A1 domain. Residue Asp-94 is part of the active site. Cys-107 and Cys-112 are disulfide-bonded. Phosphoserine is present on Ser-130. Cys-268 and Cys-272 are disulfide-bonded. The active site involves Asp-277. Cys-311 and Cys-344 are oxidised to a cystine.

This sequence belongs to the peptidase A1 family.

It is found in the secreted. The catalysed reaction is Preferential cleavage: hydrophobic, preferably aromatic, residues in P1 and P1' positions. Cleaves 1-Phe-|-Val-2, 4-Gln-|-His-5, 13-Glu-|-Ala-14, 14-Ala-|-Leu-15, 15-Leu-|-Tyr-16, 16-Tyr-|-Leu-17, 23-Gly-|-Phe-24, 24-Phe-|-Phe-25 and 25-Phe-|-Tyr-26 bonds in the B chain of insulin.. Its function is as follows. Shows particularly broad specificity; although bonds involving phenylalanine and leucine are preferred, many others are also cleaved to some extent. The chain is Pepsin A (PGA) from Macaca mulatta (Rhesus macaque).